The sequence spans 369 residues: uncharacterized protein (369 aa).

Lys-184 is subject to N6-(pyridoxal phosphate)lysine.

Belongs to the class-V pyridoxal-phosphate-dependent aminotransferase family. The cofactor is pyridoxal 5'-phosphate.

This is an uncharacterized protein from Helicobacter pylori (strain ATCC 700392 / 26695) (Campylobacter pylori).